The following is a 554-amino-acid chain: Arginine--tRNA ligase (554 aa).

The 'HIGH' region motif lies at 132 to 142; that stretch reads ANPTGPIHLGG.

It belongs to the class-I aminoacyl-tRNA synthetase family. As to quaternary structure, monomer.

The protein resides in the cytoplasm. The enzyme catalyses tRNA(Arg) + L-arginine + ATP = L-arginyl-tRNA(Arg) + AMP + diphosphate. In Clavibacter sepedonicus (Clavibacter michiganensis subsp. sepedonicus), this protein is Arginine--tRNA ligase.